The following is a 97-amino-acid chain: Aspartyl/glutamyl-tRNA(Asn/Gln) amidotransferase subunit C (97 aa).

It belongs to the GatC family. In terms of assembly, heterotrimer of A, B and C subunits.

It catalyses the reaction L-glutamyl-tRNA(Gln) + L-glutamine + ATP + H2O = L-glutaminyl-tRNA(Gln) + L-glutamate + ADP + phosphate + H(+). The catalysed reaction is L-aspartyl-tRNA(Asn) + L-glutamine + ATP + H2O = L-asparaginyl-tRNA(Asn) + L-glutamate + ADP + phosphate + 2 H(+). Functionally, allows the formation of correctly charged Asn-tRNA(Asn) or Gln-tRNA(Gln) through the transamidation of misacylated Asp-tRNA(Asn) or Glu-tRNA(Gln) in organisms which lack either or both of asparaginyl-tRNA or glutaminyl-tRNA synthetases. The reaction takes place in the presence of glutamine and ATP through an activated phospho-Asp-tRNA(Asn) or phospho-Glu-tRNA(Gln). This chain is Aspartyl/glutamyl-tRNA(Asn/Gln) amidotransferase subunit C, found in Prochlorococcus marinus (strain MIT 9301).